A 376-amino-acid polypeptide reads, in one-letter code: Heme chaperone HemW (376 aa).

Positions 1–236 (MFKLPPISLY…LKQSGYKKYE (236 aa)) constitute a Radical SAM core domain. Tyr10 is an S-adenosyl-L-methionine binding site. Residues Cys16, Cys20, and Cys23 each contribute to the [4Fe-4S] cluster site. Residues Gly66, 67-68 (GT), Glu99, Gln126, Arg138, and Asp162 contribute to the S-adenosyl-L-methionine site.

The protein belongs to the anaerobic coproporphyrinogen-III oxidase family. HemW subfamily. [4Fe-4S] cluster serves as cofactor.

The protein resides in the cytoplasm. Functionally, probably acts as a heme chaperone, transferring heme to an unknown acceptor. Binds one molecule of heme per monomer, possibly covalently. Binds 1 [4Fe-4S] cluster. The cluster is coordinated with 3 cysteines and an exchangeable S-adenosyl-L-methionine. In Buchnera aphidicola subsp. Schizaphis graminum (strain Sg), this protein is Heme chaperone HemW.